The following is a 334-amino-acid chain: Mevalonate kinase (334 aa).

110–120 (PVGAGLGSSAA) is a binding site for ATP. The Proton acceptor role is filled by Asp-161.

The protein belongs to the GHMP kinase family. Mevalonate kinase subfamily. Homodimer. Mg(2+) is required as a cofactor.

The protein resides in the cytoplasm. The catalysed reaction is (R)-mevalonate + ATP = (R)-5-phosphomevalonate + ADP + H(+). The protein operates within isoprenoid biosynthesis; isopentenyl diphosphate biosynthesis via mevalonate pathway; isopentenyl diphosphate from (R)-mevalonate: step 1/3. In terms of biological role, catalyzes the phosphorylation of (R)-mevalonate (MVA) to (R)-mevalonate 5-phosphate (MVAP). Functions in the mevalonate (MVA) pathway leading to isopentenyl diphosphate (IPP), a key precursor for the biosynthesis of isoprenoid compounds such as archaeal membrane lipids. In Thermococcus gammatolerans (strain DSM 15229 / JCM 11827 / EJ3), this protein is Mevalonate kinase.